The primary structure comprises 443 residues: Probable glycine dehydrogenase (decarboxylating) subunit 1 (443 aa).

This sequence belongs to the GcvP family. N-terminal subunit subfamily. As to quaternary structure, the glycine cleavage system is composed of four proteins: P, T, L and H. In this organism, the P 'protein' is a heterodimer of two subunits.

It carries out the reaction N(6)-[(R)-lipoyl]-L-lysyl-[glycine-cleavage complex H protein] + glycine + H(+) = N(6)-[(R)-S(8)-aminomethyldihydrolipoyl]-L-lysyl-[glycine-cleavage complex H protein] + CO2. Functionally, the glycine cleavage system catalyzes the degradation of glycine. The P protein binds the alpha-amino group of glycine through its pyridoxal phosphate cofactor; CO(2) is released and the remaining methylamine moiety is then transferred to the lipoamide cofactor of the H protein. This Chloroherpeton thalassium (strain ATCC 35110 / GB-78) protein is Probable glycine dehydrogenase (decarboxylating) subunit 1.